The sequence spans 101 residues: uncharacterized protein (101 aa).

The interval 76-101 (KGNVTRRRKKTHLGNDDGKKEAQEKM) is disordered. Residues 88–101 (LGNDDGKKEAQEKM) show a composition bias toward basic and acidic residues.

This is an uncharacterized protein from Homo sapiens (Human).